Reading from the N-terminus, the 427-residue chain is Serine hydroxymethyltransferase (427 aa).

(6S)-5,6,7,8-tetrahydrofolate contacts are provided by residues leucine 122 and 126–128; that span reads GHL. Residue lysine 231 is modified to N6-(pyridoxal phosphate)lysine. (6S)-5,6,7,8-tetrahydrofolate-binding positions include glutamate 247 and 355–357; that span reads SPF.

It belongs to the SHMT family. As to quaternary structure, homodimer. Requires pyridoxal 5'-phosphate as cofactor.

Its subcellular location is the cytoplasm. The catalysed reaction is (6R)-5,10-methylene-5,6,7,8-tetrahydrofolate + glycine + H2O = (6S)-5,6,7,8-tetrahydrofolate + L-serine. The protein operates within one-carbon metabolism; tetrahydrofolate interconversion. It functions in the pathway amino-acid biosynthesis; glycine biosynthesis; glycine from L-serine: step 1/1. Its function is as follows. Catalyzes the reversible interconversion of serine and glycine with tetrahydrofolate (THF) serving as the one-carbon carrier. This reaction serves as the major source of one-carbon groups required for the biosynthesis of purines, thymidylate, methionine, and other important biomolecules. Also exhibits THF-independent aldolase activity toward beta-hydroxyamino acids, producing glycine and aldehydes, via a retro-aldol mechanism. In Synechocystis sp. (strain ATCC 27184 / PCC 6803 / Kazusa), this protein is Serine hydroxymethyltransferase.